The sequence spans 199 residues: Recombination protein RecR (199 aa).

The C4-type zinc-finger motif lies at 56–71 (CSICFNVSQDDQCRIC). The region spanning 79–174 (SVLCVVEEYK…RVTRLASGLP (96 aa)) is the Toprim domain.

It belongs to the RecR family.

Functionally, may play a role in DNA repair. It seems to be involved in an RecBC-independent recombinational process of DNA repair. It may act with RecF and RecO. This is Recombination protein RecR from Nocardioides sp. (strain ATCC BAA-499 / JS614).